A 475-amino-acid chain; its full sequence is Ribulose bisphosphate carboxylase large chain (475 aa).

Residues 1–2 (MA) constitute a propeptide that is removed on maturation. Pro3 is subject to N-acetylproline. Asn123 and Thr173 together coordinate substrate. The active-site Proton acceptor is Lys175. Position 177 (Lys177) interacts with substrate. 3 residues coordinate Mg(2+): Lys201, Asp203, and Glu204. Position 201 is an N6-carboxylysine (Lys201). Catalysis depends on His294, which acts as the Proton acceptor. 3 residues coordinate substrate: Arg295, His327, and Ser379.

The protein belongs to the RuBisCO large chain family. Type I subfamily. Heterohexadecamer of 8 large chains and 8 small chains. It depends on Mg(2+) as a cofactor.

The protein localises to the plastid. Its subcellular location is the chloroplast. It carries out the reaction 2 (2R)-3-phosphoglycerate + 2 H(+) = D-ribulose 1,5-bisphosphate + CO2 + H2O. The enzyme catalyses D-ribulose 1,5-bisphosphate + O2 = 2-phosphoglycolate + (2R)-3-phosphoglycerate + 2 H(+). Its function is as follows. RuBisCO catalyzes two reactions: the carboxylation of D-ribulose 1,5-bisphosphate, the primary event in carbon dioxide fixation, as well as the oxidative fragmentation of the pentose substrate in the photorespiration process. Both reactions occur simultaneously and in competition at the same active site. This is Ribulose bisphosphate carboxylase large chain from Ostreococcus tauri.